A 655-amino-acid polypeptide reads, in one-letter code: Fructose-1,6-bisphosphatase class 3 (655 aa).

Belongs to the FBPase class 3 family. Mn(2+) serves as cofactor.

It carries out the reaction beta-D-fructose 1,6-bisphosphate + H2O = beta-D-fructose 6-phosphate + phosphate. It functions in the pathway carbohydrate biosynthesis; gluconeogenesis. In Porphyromonas gingivalis (strain ATCC 33277 / DSM 20709 / CIP 103683 / JCM 12257 / NCTC 11834 / 2561), this protein is Fructose-1,6-bisphosphatase class 3.